Consider the following 124-residue polypeptide: Urotensin-2 (124 aa).

Residues 1–20 form the signal peptide; the sequence is MYKLASCCLLFIGFLNPLLS. Positions 21 to 110 are excised as a propeptide; sequence LPLLDSREIS…HLLARIWKPY (90 aa). C118 and C123 are disulfide-bonded.

The protein belongs to the urotensin-2 family. Brain specific.

It localises to the secreted. Functionally, highly potent vasoconstrictor. The protein is Urotensin-2 (UTS2) of Homo sapiens (Human).